A 244-amino-acid chain; its full sequence is uncharacterized protein (244 aa).

One can recognise a GP-PDE domain in the interval 5–244 (QLLLAHRGYS…ANKKFEIKIN (240 aa)).

It to glycerophosphoryl diester phosphodiesterases (EC 3.1.4.46). To M.genitalium MG385.

This is an uncharacterized protein from Mycoplasma genitalium (strain ATCC 33530 / DSM 19775 / NCTC 10195 / G37) (Mycoplasmoides genitalium).